Here is a 212-residue protein sequence, read N- to C-terminus: Imidazole glycerol phosphate synthase subunit HisH 2 (212 aa).

In terms of domain architecture, Glutamine amidotransferase type-1 spans 3–212 (RVAIIDYGIN…LMSNFLQWNP (210 aa)). Cys82 serves as the catalytic Nucleophile. Residues His192 and Glu194 contribute to the active site.

In terms of assembly, heterodimer of HisH and HisF.

The protein localises to the cytoplasm. It carries out the reaction 5-[(5-phospho-1-deoxy-D-ribulos-1-ylimino)methylamino]-1-(5-phospho-beta-D-ribosyl)imidazole-4-carboxamide + L-glutamine = D-erythro-1-(imidazol-4-yl)glycerol 3-phosphate + 5-amino-1-(5-phospho-beta-D-ribosyl)imidazole-4-carboxamide + L-glutamate + H(+). It catalyses the reaction L-glutamine + H2O = L-glutamate + NH4(+). It functions in the pathway amino-acid biosynthesis; L-histidine biosynthesis; L-histidine from 5-phospho-alpha-D-ribose 1-diphosphate: step 5/9. IGPS catalyzes the conversion of PRFAR and glutamine to IGP, AICAR and glutamate. The HisH subunit provides the glutamine amidotransferase activity that produces the ammonia necessary to HisF for the synthesis of IGP and AICAR. This is Imidazole glycerol phosphate synthase subunit HisH 2 from Nitrobacter winogradskyi (strain ATCC 25391 / DSM 10237 / CIP 104748 / NCIMB 11846 / Nb-255).